The primary structure comprises 441 residues: Ribosomal protein uS12 methylthiotransferase RimO (441 aa).

One can recognise an MTTase N-terminal domain in the interval 8-118; that stretch reads PKIGFVSLGC…VLQHVHHYVP (111 aa). [4Fe-4S] cluster-binding residues include Cys17, Cys53, Cys82, Cys150, Cys154, and Cys157. Residues 136-373 enclose the Radical SAM core domain; that stretch reads LTPRHYAYLK…MQLQQQISAE (238 aa). The TRAM domain maps to 376 to 441; that stretch reads QEKVGREILV…DEYDLWGSRV (66 aa).

This sequence belongs to the methylthiotransferase family. RimO subfamily. [4Fe-4S] cluster is required as a cofactor.

It is found in the cytoplasm. The enzyme catalyses L-aspartate(89)-[ribosomal protein uS12]-hydrogen + (sulfur carrier)-SH + AH2 + 2 S-adenosyl-L-methionine = 3-methylsulfanyl-L-aspartate(89)-[ribosomal protein uS12]-hydrogen + (sulfur carrier)-H + 5'-deoxyadenosine + L-methionine + A + S-adenosyl-L-homocysteine + 2 H(+). Functionally, catalyzes the methylthiolation of an aspartic acid residue of ribosomal protein uS12. In Salmonella typhi, this protein is Ribosomal protein uS12 methylthiotransferase RimO.